The primary structure comprises 239 residues: Putative glutamine amidotransferase-like protein YfeJ (239 aa).

Positions 1–200 (MRVHFVVHES…IQHSQQELAD (200 aa)) constitute a Glutamine amidotransferase type-1 domain.

This Salmonella typhimurium (strain LT2 / SGSC1412 / ATCC 700720) protein is Putative glutamine amidotransferase-like protein YfeJ (yfeJ).